The chain runs to 127 residues: Small ribosomal subunit protein uS13 (127 aa).

This sequence belongs to the universal ribosomal protein uS13 family. As to quaternary structure, part of the 30S ribosomal subunit. Forms a loose heterodimer with protein S19. Forms two bridges to the 50S subunit in the 70S ribosome.

Its function is as follows. Located at the top of the head of the 30S subunit, it contacts several helices of the 16S rRNA. In the 70S ribosome it contacts the 23S rRNA (bridge B1a) and protein L5 of the 50S subunit (bridge B1b), connecting the 2 subunits; these bridges are implicated in subunit movement. Contacts the tRNAs in the A and P-sites. This is Small ribosomal subunit protein uS13 from Pelagibacter ubique (strain HTCC1062).